The primary structure comprises 296 residues: Acetyl-coenzyme A carboxylase carboxyl transferase subunit beta (296 aa).

Positions 25 to 294 (LWIKDPSTGE…NSDAPAPPEA (270 aa)) constitute a CoA carboxyltransferase N-terminal domain.

Belongs to the AccD/PCCB family. In terms of assembly, acetyl-CoA carboxylase is a heterohexamer composed of biotin carboxyl carrier protein (AccB), biotin carboxylase (AccC) and two subunits each of ACCase subunit alpha (AccA) and ACCase subunit beta (AccD).

The protein localises to the cytoplasm. It catalyses the reaction N(6)-carboxybiotinyl-L-lysyl-[protein] + acetyl-CoA = N(6)-biotinyl-L-lysyl-[protein] + malonyl-CoA. It participates in lipid metabolism; malonyl-CoA biosynthesis; malonyl-CoA from acetyl-CoA: step 1/1. Its function is as follows. Component of the acetyl coenzyme A carboxylase (ACC) complex. Biotin carboxylase (BC) catalyzes the carboxylation of biotin on its carrier protein (BCCP) and then the CO(2) group is transferred by the transcarboxylase to acetyl-CoA to form malonyl-CoA. The protein is Acetyl-coenzyme A carboxylase carboxyl transferase subunit beta of Brucella ovis (strain ATCC 25840 / 63/290 / NCTC 10512).